The primary structure comprises 105 residues: Cortistatin (105 aa).

Residues 1–18 (MPLSPGLLLLLLSGATAT) form the signal peptide. The propeptide occupies 19–74 (AALPLEGGPTGRDSEHMQEAAGIRKSSLLTFLAWWFEWTSQASAGPLIGEEAREVA). Residues Cys-93 and Cys-104 are joined by a disulfide bond.

It belongs to the somatostatin family. Expressed in a subset of GABAergic cells in the cortex and hippocampus.

It localises to the secreted. In terms of biological role, binds to all human somatostatin receptor (SSTR) subtypes. It also inhibits cAMP production induced by forskolin through SSTRs. This Homo sapiens (Human) protein is Cortistatin (CORT).